The primary structure comprises 341 residues: Phenylalanine--tRNA ligase alpha subunit (341 aa).

Residue E259 coordinates Mg(2+).

Belongs to the class-II aminoacyl-tRNA synthetase family. Phe-tRNA synthetase alpha subunit type 1 subfamily. As to quaternary structure, tetramer of two alpha and two beta subunits. Mg(2+) is required as a cofactor.

It localises to the cytoplasm. It carries out the reaction tRNA(Phe) + L-phenylalanine + ATP = L-phenylalanyl-tRNA(Phe) + AMP + diphosphate + H(+). The polypeptide is Phenylalanine--tRNA ligase alpha subunit (Mycobacterium bovis (strain ATCC BAA-935 / AF2122/97)).